A 143-amino-acid chain; its full sequence is Mannitol-specific phosphotransferase enzyme IIA component (143 aa).

One can recognise a PTS EIIA type-2 domain in the interval 1–142 (MKLLKNNIYI…DKVLEFLAKH (142 aa)). The active-site Tele-phosphohistidine intermediate is His61. Residue His61 is modified to Phosphohistidine; by HPr.

The protein localises to the cytoplasm. In terms of biological role, the phosphoenolpyruvate-dependent sugar phosphotransferase system (sugar PTS), a major carbohydrate active transport system, catalyzes the phosphorylation of incoming sugar substrates concomitantly with their translocation across the cell membrane. The enzyme II CmtAB PTS system is involved in D-mannitol transport. The polypeptide is Mannitol-specific phosphotransferase enzyme IIA component (mtlF) (Mycoplasma pneumoniae (strain ATCC 29342 / M129 / Subtype 1) (Mycoplasmoides pneumoniae)).